Consider the following 153-residue polypeptide: Probable phospholipase A2 homolog 2 (153 aa).

The N-terminal stretch at 1–25 is a signal peptide; sequence MRFFLKLAPRCSVLLLLLLVTASRG. Intrachain disulfides connect Cys42–Cys70, Cys46–Cys76, Cys51–Cys123, Cys63–Cys83, Cys82–Cys109, and Cys89–Cys102. Ca(2+)-binding residues include Tyr62, Gly64, and Tyr67. The active site involves His86. Residue Asp87 coordinates Ca(2+).

This sequence belongs to the phospholipase A2 family. Ca(2+) serves as cofactor.

It is found in the secreted. The enzyme catalyses a 1,2-diacyl-sn-glycero-3-phosphocholine + H2O = a 1-acyl-sn-glycero-3-phosphocholine + a fatty acid + H(+). In terms of biological role, PA2 catalyzes the calcium-dependent hydrolysis of the 2-acyl groups in 3-sn-phosphoglycerides. Releases lysophospholipids (LPLs) and free fatty acids (FFAs) from membrane phospholipids in response to hormones and other external stimuli. The polypeptide is Probable phospholipase A2 homolog 2 (PLA2-II) (Oryza sativa subsp. japonica (Rice)).